A 495-amino-acid chain; its full sequence is Rho GTPase-activating protein 19 (495 aa).

Positions 98-304 (MSLKRKEKGV…FMIKHSQKLF (207 aa)) constitute a Rho-GAP domain. Disordered regions lie at residues 327–362 (KDDLDLLTSPGSKELQPLKSQKRSRLDSCHQEETQQ) and 393–495 (KHPS…SSSL). Basic and acidic residues-rich tracts occupy residues 350–362 (SRLDSCHQEETQQ), 433–452 (QERKSRDSTPEPKRVSKENV), and 470–481 (KSLEGQKEESCR).

Functionally, GTPase activator for the Rho-type GTPases by converting them to an inactive GDP-bound state. This chain is Rho GTPase-activating protein 19 (ARHGAP19), found in Gallus gallus (Chicken).